The following is a 423-amino-acid chain: Serine hydroxymethyltransferase (423 aa).

(6S)-5,6,7,8-tetrahydrofolate contacts are provided by residues Leu120 and 124–126 (GHL). Lys229 carries the post-translational modification N6-(pyridoxal phosphate)lysine. A (6S)-5,6,7,8-tetrahydrofolate-binding site is contributed by 353–355 (SPF).

The protein belongs to the SHMT family. In terms of assembly, homodimer. It depends on pyridoxal 5'-phosphate as a cofactor.

It is found in the cytoplasm. It carries out the reaction (6R)-5,10-methylene-5,6,7,8-tetrahydrofolate + glycine + H2O = (6S)-5,6,7,8-tetrahydrofolate + L-serine. Its pathway is one-carbon metabolism; tetrahydrofolate interconversion. The protein operates within amino-acid biosynthesis; glycine biosynthesis; glycine from L-serine: step 1/1. In terms of biological role, catalyzes the reversible interconversion of serine and glycine with tetrahydrofolate (THF) serving as the one-carbon carrier. This reaction serves as the major source of one-carbon groups required for the biosynthesis of purines, thymidylate, methionine, and other important biomolecules. Also exhibits THF-independent aldolase activity toward beta-hydroxyamino acids, producing glycine and aldehydes, via a retro-aldol mechanism. In Prochlorococcus marinus (strain MIT 9301), this protein is Serine hydroxymethyltransferase.